The chain runs to 607 residues: Siderochrome iron transporter 2 (607 aa).

The segment at 1-46 is disordered; it reads MGLFGSFGARNKATPQVPPGAVAKAPEGTPKGPETNDQPDMDSSRL. 13 helical membrane-spanning segments follow: residues 86 to 106, 129 to 149, 152 to 172, 180 to 200, 210 to 230, 242 to 262, 297 to 317, 326 to 346, 367 to 387, 404 to 424, 432 to 452, 459 to 479, and 499 to 519; these read VWAT…QSGI, ILSS…LNLW, AEGF…LAAC, AGYV…DVFV, AFTF…APLA, WAYG…AVVF, IIGA…FSLA, SAAF…FAAW, LGAC…DLYF, YMTQ…GLWV, HTCL…MIHF, IGYV…LVIG, and FIGL…AAIY. Asparagine 538 is a glycosylation site (N-linked (GlcNAc...) asparagine). The chain crosses the membrane as a helical span at residues 573-593; it reads FGAVAATCILILGIPAIAVWK.

Belongs to the major facilitator superfamily.

The protein localises to the cell membrane. Functionally, major facilitator transporter involved in ferrichrome (FC) uptake. In Aspergillus fumigatus (strain ATCC MYA-4609 / CBS 101355 / FGSC A1100 / Af293) (Neosartorya fumigata), this protein is Siderochrome iron transporter 2.